The chain runs to 640 residues: WW domain-binding protein 11 (640 aa).

A compositionally biased stretch (polar residues) spans 1–11 (MGRRSTSSTKS). The tract at residues 1 to 37 (MGRRSTSSTKSGKFMNPTDQARKEARKRELKKNKKQR) is disordered. Residues 28 to 37 (RELKKNKKQR) show a composition bias toward basic residues. Residues 75–122 (EKVLRDKRKKLRETFERIVRLYERENPETYKELRKLELEYETKRGQLS) adopt a coiled-coil conformation. 3 disordered regions span residues 155–174 (DIPLPGAQPPSILKKSSALG), 187–563 (VPRL…ISAK), and 582–625 (RVRR…LKTK). Residues 194 to 207 (RKPPGPPPGPPPPQ) are compositionally biased toward pro residues. The span at 230–240 (DGGRDSDSKSE) shows a compositional bias: basic and acidic residues. Residues 241–251 (ADEESDSQEDS) are compositionally biased toward acidic residues. A compositionally biased stretch (basic and acidic residues) spans 252–274 (SAEREDSDRGERDEERERADKHT). Ser285 is subject to Phosphoserine. Over residues 315-338 (PEEEEEDEEEEYSESEDSEAEDQA) the composition is skewed to acidic residues. A compositionally biased stretch (low complexity) spans 356–371 (APMAAQQPPSLMQAPP). Composition is skewed to pro residues over residues 372-412 (ITGP…PPGL) and 422-491 (RLLP…PPLN). A PGR motif is present at residues 421-432 (PRLLPPGPPPGR). Over residues 547 to 558 (GSGGASAQGGGA) the composition is skewed to gly residues. Residues 586–599 (DRAGGTGRREEERP) show a composition bias toward basic and acidic residues. The span at 603–616 (QQTPAHQAPPIAHA) shows a compositional bias: low complexity.

It localises to the cytoplasm. Its subcellular location is the nucleus. Activates pre-mRNA splicing. The sequence is that of WW domain-binding protein 11 (wbp11) from Danio rerio (Zebrafish).